The sequence spans 123 residues: Large ribosomal subunit protein uL18 (123 aa).

This sequence belongs to the universal ribosomal protein uL18 family. As to quaternary structure, part of the 50S ribosomal subunit; part of the 5S rRNA/L5/L18/L25 subcomplex. Contacts the 5S and 23S rRNAs.

Its function is as follows. This is one of the proteins that bind and probably mediate the attachment of the 5S RNA into the large ribosomal subunit, where it forms part of the central protuberance. This Chlamydia abortus (strain DSM 27085 / S26/3) (Chlamydophila abortus) protein is Large ribosomal subunit protein uL18.